A 613-amino-acid polypeptide reads, in one-letter code: V-type proton ATPase catalytic subunit A isoform 1 (613 aa).

240 to 247 (GAFGCGKT) is an ATP binding site.

Belongs to the ATPase alpha/beta chains family. As to quaternary structure, V-ATPase is a heteromultimeric enzyme composed of a peripheral catalytic V1 complex (main components: subunits A, B, C, D, E, and F) attached to an integral membrane V0 proton pore complex (main component: the proteolipid protein).

It catalyses the reaction ATP + H2O + 4 H(+)(in) = ADP + phosphate + 5 H(+)(out). In terms of biological role, catalytic subunit of the peripheral V1 complex of vacuolar ATPase. V-ATPase vacuolar ATPase is responsible for acidifying a variety of intracellular compartments in eukaryotic cells. The polypeptide is V-type proton ATPase catalytic subunit A isoform 1 (Acetabularia acetabulum (Mermaid's wine glass)).